A 233-amino-acid polypeptide reads, in one-letter code: MGRGMQKQRFCLDTSAFTEPSVRKALGVKTVTELTDKVMDLIAEARIKLNISCHIPYPTVYNELMGFLENENCPRDVIVKVDTWLVKKTPNRYEIKIPSEIFYEYVKDLRERINKGMRIGEEHIIKATDMVYELSKKHPEMGKNEIINKVLSKTINTFRNKYRSALRVGTLDSAPDLDVLLLAKELDAAVVASDGGIEKWAQRLGLRFVDASDFPFMLEEYLKHNDRHLRIKY.

Belongs to the HARP family.

The catalysed reaction is Endonucleolytic cleavage of RNA, removing 5'-extranucleotides from tRNA precursor.. Its function is as follows. RNA-free RNase P that catalyzes the removal of the 5'-leader sequence from pre-tRNA to produce the mature 5'-terminus. This Methanocaldococcus jannaschii (strain ATCC 43067 / DSM 2661 / JAL-1 / JCM 10045 / NBRC 100440) (Methanococcus jannaschii) protein is RNA-free ribonuclease P.